Reading from the N-terminus, the 105-residue chain is Dynein axonemal light chain 4 (105 aa).

Belongs to the dynein light chain family. In terms of assembly, consists of at least two heavy chains and a number of intermediate and light chains.

It localises to the cytoplasm. Its subcellular location is the cytoskeleton. It is found in the cilium axoneme. Force generating protein of respiratory cilia. Produces force towards the minus ends of microtubules. Dynein has ATPase activity. In Mus musculus (Mouse), this protein is Dynein axonemal light chain 4 (Dnal4).